The following is a 267-amino-acid chain: 4-hydroxy-2-oxo-heptane-1,7-dioate aldolase (267 aa).

Catalysis depends on histidine 45, which acts as the Proton acceptor. Substrate is bound at residue glutamine 147. A divalent metal cation is bound at residue glutamate 149. Substrate is bound by residues alanine 174 and aspartate 175. Aspartate 175 contacts a divalent metal cation.

The protein belongs to the HpcH/HpaI aldolase family. In terms of assembly, homohexamer; trimer of dimers. It depends on a divalent metal cation as a cofactor.

It carries out the reaction 4-hydroxy-2-oxoheptanedioate = succinate semialdehyde + pyruvate. Its pathway is aromatic compound metabolism; 4-hydroxyphenylacetate degradation; pyruvate and succinate semialdehyde from 4-hydroxyphenylacetate: step 7/7. Functionally, catalyzes the reversible retro-aldol cleavage of 4-hydroxy-2-ketoheptane-1,7-dioate (HKHD) to pyruvate and succinic semialdehyde. In Shigella flexneri, this protein is 4-hydroxy-2-oxo-heptane-1,7-dioate aldolase.